We begin with the raw amino-acid sequence, 437 residues long: Leucine-rich repeat flightless-interacting protein 2 (437 aa).

Position 18 is a phosphoserine (Ser-18). The stretch at 22–49 forms a coiled coil; it reads EALSNIAREAEARLAAKRAARAEARDIR. Basic and acidic residues predominate over residues 33–62; it reads ARLAAKRAARAEARDIRMRELERQQRESSS. The disordered stretch occupies residues 33–152; the sequence is ARLAAKRAAR…DTSLSELRES (120 aa). Over residues 63 to 74 the composition is skewed to polar residues; sequence KDITGTHWSRAS. Positions 77–105 are enriched in basic and acidic residues; sequence KRRDMMYDSIKDRSSRVSSLLDEKSDKQY. Residues 110-139 show a composition bias toward polar residues; sequence TRPSSRNSASATTPLSGNSSRRGSGDTSSL. Residues Ser-114, Ser-117, Ser-125, Ser-129, and Ser-133 each carry the phosphoserine modification. A Phosphothreonine modification is found at Thr-136. Phosphoserine occurs at positions 137 and 138. Coiled-coil stretches lie at residues 143 to 239 and 282 to 430; these read DTSL…LIEK and LDVR…KANR.

This sequence belongs to the LRRFIP family. In terms of assembly, interacts with DVL3 and FLII. Weakly interacts with MYD88 in resting cells. Following LPS-stimulation, the interaction with MYD88 is rapidly enhanced; the complex gradually dissociates to basal levels after 6 hours of stimulation. Interaction with MYD88 is regulated by LPS-induced phosphorylation. In the presence of LPS, competes with FLII for MYD88-binding.

Functionally, may function as activator of the canonical Wnt signaling pathway, in association with DVL3, upstream of CTNNB1/beta-catenin. Positively regulates Toll-like receptor (TLR) signaling in response to agonist probably by competing with the negative FLII regulator for MYD88-binding. The polypeptide is Leucine-rich repeat flightless-interacting protein 2 (Lrrfip2) (Rattus norvegicus (Rat)).